The sequence spans 125 residues: Small ribosomal subunit protein uS12 (125 aa).

The tract at residues 9-31 is disordered; that stretch reads RQGREVEKIKSKSPAMENSPQRR. Position 89 is a 3-methylthioaspartic acid (Asp-89). The segment at 106–125 is disordered; that stretch reads GVKDRKQSRSKYGAKRPKKA. The span at 113-125 shows a compositional bias: basic residues; it reads SRSKYGAKRPKKA.

This sequence belongs to the universal ribosomal protein uS12 family. As to quaternary structure, part of the 30S ribosomal subunit. Contacts proteins S8 and S17. May interact with IF1 in the 30S initiation complex.

With S4 and S5 plays an important role in translational accuracy. In terms of biological role, interacts with and stabilizes bases of the 16S rRNA that are involved in tRNA selection in the A site and with the mRNA backbone. Located at the interface of the 30S and 50S subunits, it traverses the body of the 30S subunit contacting proteins on the other side and probably holding the rRNA structure together. The combined cluster of proteins S8, S12 and S17 appears to hold together the shoulder and platform of the 30S subunit. The polypeptide is Small ribosomal subunit protein uS12 (Polaromonas sp. (strain JS666 / ATCC BAA-500)).